The following is a 100-amino-acid chain: Small ribosomal subunit protein uS14c (100 aa).

Belongs to the universal ribosomal protein uS14 family. In terms of assembly, part of the 30S ribosomal subunit.

The protein resides in the plastid. It is found in the chloroplast. Binds 16S rRNA, required for the assembly of 30S particles. This chain is Small ribosomal subunit protein uS14c, found in Capsella bursa-pastoris (Shepherd's purse).